Here is a 109-residue protein sequence, read N- to C-terminus: Putative pterin-4-alpha-carbinolamine dehydratase (109 aa).

This sequence belongs to the pterin-4-alpha-carbinolamine dehydratase family.

It carries out the reaction (4aS,6R)-4a-hydroxy-L-erythro-5,6,7,8-tetrahydrobiopterin = (6R)-L-erythro-6,7-dihydrobiopterin + H2O. The polypeptide is Putative pterin-4-alpha-carbinolamine dehydratase (Rickettsia canadensis (strain McKiel)).